The chain runs to 392 residues: Phospho-N-acetylmuramoyl-pentapeptide-transferase (392 aa).

11 consecutive transmembrane segments (helical) span residues 24-44, 76-96, 100-120, 137-157, 170-190, 193-213, 225-245, 262-282, 289-309, 314-334, and 369-389; these read YLTM…LLAG, TMGG…WFDL, FVWI…VDDW, YFWQ…CISE, WVQS…VPFF, VSYP…IVGA, GLAI…AYVT, SGEL…FLWF, VFMG…IAVI, IVLA…MLQV, and QVVI…LSTL.

Belongs to the glycosyltransferase 4 family. MraY subfamily. Requires Mg(2+) as cofactor.

The protein localises to the cell inner membrane. The catalysed reaction is UDP-N-acetyl-alpha-D-muramoyl-L-alanyl-gamma-D-glutamyl-meso-2,6-diaminopimeloyl-D-alanyl-D-alanine + di-trans,octa-cis-undecaprenyl phosphate = di-trans,octa-cis-undecaprenyl diphospho-N-acetyl-alpha-D-muramoyl-L-alanyl-D-glutamyl-meso-2,6-diaminopimeloyl-D-alanyl-D-alanine + UMP. The protein operates within cell wall biogenesis; peptidoglycan biosynthesis. Functionally, catalyzes the initial step of the lipid cycle reactions in the biosynthesis of the cell wall peptidoglycan: transfers peptidoglycan precursor phospho-MurNAc-pentapeptide from UDP-MurNAc-pentapeptide onto the lipid carrier undecaprenyl phosphate, yielding undecaprenyl-pyrophosphoryl-MurNAc-pentapeptide, known as lipid I. The protein is Phospho-N-acetylmuramoyl-pentapeptide-transferase of Delftia acidovorans (strain DSM 14801 / SPH-1).